We begin with the raw amino-acid sequence, 367 residues long: Sigma54-dependent transcriptional regulator SfnR (367 aa).

The Sigma-54 factor interaction domain maps to 21 to 250 (QVFEDPKSQA…LENVIHHTLL (230 aa)). Residues 49 to 56 (GETGTGKE) and 112 to 121 (ADGGTLFLDE) contribute to the ATP site.

Its function is as follows. Involved in the dimethyl sulfide degradation pathway. Activates the expression of sfnG and sfnF. This chain is Sigma54-dependent transcriptional regulator SfnR, found in Pseudomonas fluorescens (strain Pf0-1).